The primary structure comprises 194 residues: Probable nicotinate-nucleotide adenylyltransferase (194 aa).

The protein belongs to the NadD family.

The enzyme catalyses nicotinate beta-D-ribonucleotide + ATP + H(+) = deamido-NAD(+) + diphosphate. Its pathway is cofactor biosynthesis; NAD(+) biosynthesis; deamido-NAD(+) from nicotinate D-ribonucleotide: step 1/1. In terms of biological role, catalyzes the reversible adenylation of nicotinate mononucleotide (NaMN) to nicotinic acid adenine dinucleotide (NaAD). This is Probable nicotinate-nucleotide adenylyltransferase from Brucella suis biovar 1 (strain 1330).